A 281-amino-acid chain; its full sequence is Probable endonuclease 4 (281 aa).

His-69, His-109, Glu-145, Asp-179, His-182, His-216, Asp-229, His-231, and Glu-261 together coordinate Zn(2+).

It belongs to the AP endonuclease 2 family. The cofactor is Zn(2+).

It carries out the reaction Endonucleolytic cleavage to 5'-phosphooligonucleotide end-products.. In terms of biological role, endonuclease IV plays a role in DNA repair. It cleaves phosphodiester bonds at apurinic or apyrimidinic (AP) sites, generating a 3'-hydroxyl group and a 5'-terminal sugar phosphate. The protein is Probable endonuclease 4 of Parabacteroides distasonis (strain ATCC 8503 / DSM 20701 / CIP 104284 / JCM 5825 / NCTC 11152).